Here is a 348-residue protein sequence, read N- to C-terminus: MSKQTLVLLYGGRSAEREVSVLSAESVMRAVNYDKFLVKTYFITQMGQFIKTQQFSEKPSESERLMTNETIELTQKIKPSDIYEEGAVVFPVLHGPMGEDGSIQGFLEVLRMPYIGTNVMSSSIAMDKITTKRVLESIGIPQVAYTVYIDGQDLEACLVETLARLTFPIFVKPANMGSSVGISKAQTKVELRKAIQLALTYDSRVLIEQGVVAREIEVGLLGNDKVKSTLPGEVIKDVDFYDYQAKYVDNKITMAIPADVDQSIVTEMRSYAEVAFKALGGCGLSRCDFFLTQDGQVYLNELNTMPGFTQWSMYPLLWENMGLAYPDLIEVLVTLAQEMFDQRESHLI.

Residues lysine 132–threonine 334 form the ATP-grasp domain. ATP is bound at residue leucine 162–glutamate 217. 3 residues coordinate Mg(2+): aspartate 288, glutamate 301, and asparagine 303.

The protein belongs to the D-alanine--D-alanine ligase family. The cofactor is Mg(2+). It depends on Mn(2+) as a cofactor.

It is found in the cytoplasm. It carries out the reaction 2 D-alanine + ATP = D-alanyl-D-alanine + ADP + phosphate + H(+). The protein operates within cell wall biogenesis; peptidoglycan biosynthesis. Functionally, cell wall formation. The protein is D-alanine--D-alanine ligase of Streptococcus pyogenes serotype M2 (strain MGAS10270).